The following is a 100-amino-acid chain: Glutamyl-tRNA(Gln) amidotransferase subunit C (100 aa).

This sequence belongs to the GatC family. Heterotrimer of A, B and C subunits.

It catalyses the reaction L-glutamyl-tRNA(Gln) + L-glutamine + ATP + H2O = L-glutaminyl-tRNA(Gln) + L-glutamate + ADP + phosphate + H(+). The catalysed reaction is L-aspartyl-tRNA(Asn) + L-glutamine + ATP + H2O = L-asparaginyl-tRNA(Asn) + L-glutamate + ADP + phosphate + 2 H(+). Allows the formation of correctly charged Asn-tRNA(Asn) or Gln-tRNA(Gln) through the transamidation of misacylated Asp-tRNA(Asn) or Glu-tRNA(Gln) in organisms which lack either or both of asparaginyl-tRNA or glutaminyl-tRNA synthetases. The reaction takes place in the presence of glutamine and ATP through an activated phospho-Asp-tRNA(Asn) or phospho-Glu-tRNA(Gln). In Rickettsia conorii (strain ATCC VR-613 / Malish 7), this protein is Glutamyl-tRNA(Gln) amidotransferase subunit C.